We begin with the raw amino-acid sequence, 61 residues long: Large ribosomal subunit protein uL30 (61 aa).

This sequence belongs to the universal ribosomal protein uL30 family. In terms of assembly, part of the 50S ribosomal subunit.

This is Large ribosomal subunit protein uL30 from Chlorobium luteolum (strain DSM 273 / BCRC 81028 / 2530) (Pelodictyon luteolum).